The primary structure comprises 235 residues: High mobility group protein 1.2 (235 aa).

Positions Met1 to Gln34 are enriched in polar residues. A disordered region spans residues Met1 to Gly47. 2 DNA-binding regions (HMG box) span residues Gly47 to Gly117 and Pro135 to Lys203.

The protein belongs to the HMGB family.

It is found in the nucleus. The protein is High mobility group protein 1.2 (hmg-1.2) of Caenorhabditis elegans.